The chain runs to 444 residues: Tryptophan 5-hydroxylase 1 (444 aa).

An ACT domain is found at 19–94; it reads SLIFSLKNEV…NVLSVNLPDN (76 aa). Ser-58 is subject to Phosphoserine; by PKA. Residues Tyr-235, Arg-257, and Thr-265 each coordinate L-tryptophan. 3 residues coordinate Fe cation: His-272, His-277, and Glu-317. L-tryptophan-binding residues include Ser-336 and Ile-366.

Belongs to the biopterin-dependent aromatic amino acid hydroxylase family. As to quaternary structure, homotetramer. Interacts with DNAJC12. Fe(2+) serves as cofactor. In terms of processing, ubiquitinated, leading to its degradation by the proteasome. Ubiquitinated is triggered by phosphorylation. Phosphorylated; triggering degradation by the proteasome. As to expression, seems to be less widely expressed than isoform 1.

It catalyses the reaction (6R)-L-erythro-5,6,7,8-tetrahydrobiopterin + L-tryptophan + O2 = 5-hydroxy-L-tryptophan + (4aS,6R)-4a-hydroxy-L-erythro-5,6,7,8-tetrahydrobiopterin. It participates in aromatic compound metabolism; serotonin biosynthesis; serotonin from L-tryptophan: step 1/2. In terms of biological role, oxidizes L-tryptophan to 5-hydroxy-l-tryptophan in the rate-determining step of serotonin biosynthesis. The polypeptide is Tryptophan 5-hydroxylase 1 (TPH1) (Homo sapiens (Human)).